The following is a 91-amino-acid chain: MSDERAPQRSTGPRKKRPFQRRKVCRFCADKQVTIDYKDPRTLRYFISERGKIIPRRISGNCAKHQREITEAIKRARNIALLPIAGSHAAQ.

A disordered region spans residues 1 to 21; that stretch reads MSDERAPQRSTGPRKKRPFQR. The span at 12-21 shows a compositional bias: basic residues; sequence GPRKKRPFQR.

Belongs to the bacterial ribosomal protein bS18 family. In terms of assembly, part of the 30S ribosomal subunit. Forms a tight heterodimer with protein bS6.

In terms of biological role, binds as a heterodimer with protein bS6 to the central domain of the 16S rRNA, where it helps stabilize the platform of the 30S subunit. The protein is Small ribosomal subunit protein bS18 of Geotalea daltonii (strain DSM 22248 / JCM 15807 / FRC-32) (Geobacter daltonii).